The primary structure comprises 273 residues: Dermonecrotic toxin LapSicTox-alphaII1 (273 aa).

The active site involves H5. 2 residues coordinate Mg(2+): E25 and D27. Catalysis depends on H41, which acts as the Nucleophile. 2 disulfides stabilise this stretch: C45/C51 and C47/C191. D85 provides a ligand contact to Mg(2+).

This sequence belongs to the arthropod phospholipase D family. Class II subfamily. It depends on Mg(2+) as a cofactor. Expressed by the venom gland.

It is found in the secreted. The catalysed reaction is an N-(acyl)-sphingosylphosphocholine = an N-(acyl)-sphingosyl-1,3-cyclic phosphate + choline. The enzyme catalyses an N-(acyl)-sphingosylphosphoethanolamine = an N-(acyl)-sphingosyl-1,3-cyclic phosphate + ethanolamine. It carries out the reaction a 1-acyl-sn-glycero-3-phosphocholine = a 1-acyl-sn-glycero-2,3-cyclic phosphate + choline. It catalyses the reaction a 1-acyl-sn-glycero-3-phosphoethanolamine = a 1-acyl-sn-glycero-2,3-cyclic phosphate + ethanolamine. Dermonecrotic toxins cleave the phosphodiester linkage between the phosphate and headgroup of certain phospholipids (sphingolipid and lysolipid substrates), forming an alcohol (often choline) and a cyclic phosphate. This toxin acts on sphingomyelin (SM). It may also act on ceramide phosphoethanolamine (CPE), lysophosphatidylcholine (LPC) and lysophosphatidylethanolamine (LPE), but not on lysophosphatidylserine (LPS), and lysophosphatidylglycerol (LPG). It acts by transphosphatidylation, releasing exclusively cyclic phosphate products as second products. Induces dermonecrosis, hemolysis, increased vascular permeability, edema, inflammatory response, and platelet aggregation. This is Dermonecrotic toxin LapSicTox-alphaII1 from Loxosceles apachea (Apache recluse spider).